Here is a 359-residue protein sequence, read N- to C-terminus: uncharacterized protein (359 aa).

Residues Ala-73–Ala-88 show a composition bias toward low complexity. Residues Ala-73 to Ala-93 form a disordered region. Residues Pro-179–Glu-354 form the Macro domain.

This is an uncharacterized protein from Mycobacterium tuberculosis (strain ATCC 25618 / H37Rv).